We begin with the raw amino-acid sequence, 411 residues long: Serine hydroxymethyltransferase (411 aa).

120 to 122 (GHL) is a binding site for (6S)-5,6,7,8-tetrahydrofolate. Lys-225 is modified (N6-(pyridoxal phosphate)lysine). Residue 350–352 (SPF) participates in (6S)-5,6,7,8-tetrahydrofolate binding.

Belongs to the SHMT family. In terms of assembly, homodimer. Pyridoxal 5'-phosphate serves as cofactor.

The protein resides in the cytoplasm. The enzyme catalyses (6R)-5,10-methylene-5,6,7,8-tetrahydrofolate + glycine + H2O = (6S)-5,6,7,8-tetrahydrofolate + L-serine. The protein operates within one-carbon metabolism; tetrahydrofolate interconversion. It participates in amino-acid biosynthesis; glycine biosynthesis; glycine from L-serine: step 1/1. Its function is as follows. Catalyzes the reversible interconversion of serine and glycine with tetrahydrofolate (THF) serving as the one-carbon carrier. This reaction serves as the major source of one-carbon groups required for the biosynthesis of purines, thymidylate, methionine, and other important biomolecules. Also exhibits THF-independent aldolase activity toward beta-hydroxyamino acids, producing glycine and aldehydes, via a retro-aldol mechanism. In Limosilactobacillus reuteri (strain DSM 20016) (Lactobacillus reuteri), this protein is Serine hydroxymethyltransferase.